The primary structure comprises 115 residues: U3-lycotoxin-Ls1e (115 aa).

Residues 1–20 (MKFVLLFGVLSLTLFSYSSA) form the signal peptide. The propeptide occupies 21-44 (EMLDDFDQADEDELLSLIEKEEAR). 4 disulfide bridges follow: cysteine 48–cysteine 63, cysteine 55–cysteine 72, cysteine 62–cysteine 87, and cysteine 74–cysteine 85.

The protein belongs to the neurotoxin 19 (CSTX) family. 01 subfamily. As to expression, expressed by the venom gland.

The protein resides in the secreted. The sequence is that of U3-lycotoxin-Ls1e from Lycosa singoriensis (Wolf spider).